The chain runs to 1495 residues: ESX secretion system protein YukB (1495 aa).

2 consecutive transmembrane segments (helical) span residues 246–266 and 270–290; these read LWLV…VAII and GIFI…STVQ. 2 FtsK domains span residues 661–858 and 993–1177; these read KDDI…TDSK and QAPI…SEGY. Residues 682–689 and 1010–1017 contribute to the ATP site; these read GTTGSGKS and GSSGYGKS.

This sequence belongs to the EssC family.

The protein localises to the cell membrane. Its function is as follows. Required for YukE secretion. Probable component or regulator of the ESX/ESAT-6-like secretion system (BsEss). This is ESX secretion system protein YukB (yukB) from Bacillus subtilis (strain 168).